The chain runs to 87 residues: UPF0237 protein YjhC (87 aa).

Positions 4 to 76 (VVTVVGADKI…EALGVNIHVQ (73 aa)) constitute an ACT domain.

It belongs to the UPF0237 family.

The chain is UPF0237 protein YjhC (yjhC) from Lactococcus lactis subsp. lactis (strain IL1403) (Streptococcus lactis).